A 161-amino-acid chain; its full sequence is Ribonuclease H (161 aa).

Positions glutamine 12–glutamate 155 constitute an RNase H type-1 domain. 4 residues coordinate Mg(2+): aspartate 21, glutamate 59, aspartate 81, and aspartate 147.

The protein belongs to the RNase H family. Monomer. The cofactor is Mg(2+).

Its subcellular location is the cytoplasm. It carries out the reaction Endonucleolytic cleavage to 5'-phosphomonoester.. Its function is as follows. Endonuclease that specifically degrades the RNA of RNA-DNA hybrids. The sequence is that of Ribonuclease H from Polaromonas naphthalenivorans (strain CJ2).